We begin with the raw amino-acid sequence, 526 residues long: DDB1- and CUL4-associated factor 17 (526 aa).

2 helical membrane passes run 200-220 (ILMR…MLEI) and 237-257 (GVLA…EYIV).

It is found in the membrane. Its subcellular location is the nucleus. The protein resides in the nucleolus. The protein operates within protein modification; protein ubiquitination. May function as a substrate receptor for CUL4-DDB1 E3 ubiquitin-protein ligase complex. In Danio rerio (Zebrafish), this protein is DDB1- and CUL4-associated factor 17 (dcaf17).